Consider the following 497-residue polypeptide: Tyrosine-protein kinase SPK-1 (497 aa).

A disordered region spans residues 1-25 (MGQKFSIKCKKQSKNKNTSKCQKIP). The 62-residue stretch at 33 to 94 (PGSYMVKAKY…PSNYVSKQDG (62 aa)) folds into the SH3 domain. The region spanning 100 to 200 (EAWREIQRWE…NTHIPLTDPM (101 aa)) is the SH2 domain. The 263-residue stretch at 220 to 482 (IEILNEIGRG…LVLQEKMDLL (263 aa)) folds into the Protein kinase domain. ATP-binding positions include 226-234 (IGRGFFGSV) and K248. Catalysis depends on D342, which acts as the Proton acceptor.

Belongs to the protein kinase superfamily. Tyr protein kinase family.

It carries out the reaction L-tyrosyl-[protein] + ATP = O-phospho-L-tyrosyl-[protein] + ADP + H(+). This Girardia tigrina (Planarian) protein is Tyrosine-protein kinase SPK-1.